A 196-amino-acid chain; its full sequence is Golgi to ER traffic protein 1 (196 aa).

Topologically, residues 1 to 10 (MFLDLHPYTI) are lumenal. A helical membrane pass occupies residues 11 to 30 (LVSIFIILLVKQIVGRIGKS). Topologically, residues 31 to 114 (TIQEFVWLLY…SIDKLANVLL (84 aa)) are cytoplasmic. Residues 76 to 114 (AKWTKLNRQADKLTSEIQKLNEEIRQSKASIDKLANVLL) adopt a coiled-coil conformation. Residues 115–135 (MVLTTLPIWVARIFFRKTHLF) traverse the membrane as a helical segment. Topologically, residues 136–159 (YLRSGIFPRYIEWVLALPFFPSGA) are lumenal. Residues 160–176 (VGLTVWMFAANSVIHNV) traverse the membrane as a helical segment. Topologically, residues 177–196 (ISLVSFAFEKRVEKPVRQKK) are cytoplasmic.

The protein belongs to the WRB/GET1 family. As to quaternary structure, component of the Golgi to ER traffic (GET) complex, which is composed of GET1, GET2 and GET3. Within the complex, GET1 and GET2 form a heterotetramer which is stabilized by phosphatidylinositol binding and which binds to the GET3 homodimer.

It localises to the endoplasmic reticulum membrane. It is found in the golgi apparatus membrane. Its function is as follows. Required for the post-translational delivery of tail-anchored (TA) proteins to the endoplasmic reticulum. Together with GET2, acts as a membrane receptor for soluble GET3, which recognizes and selectively binds the transmembrane domain of TA proteins in the cytosol. The GET complex cooperates with the HDEL receptor ERD2 to mediate the ATP-dependent retrieval of resident ER proteins that contain a C-terminal H-D-E-L retention signal from the Golgi to the ER. The polypeptide is Golgi to ER traffic protein 1 (Candida tropicalis (strain ATCC MYA-3404 / T1) (Yeast)).